Reading from the N-terminus, the 272-residue chain is MPALDEIKSSWADEVELDSGSLPPPTEIIENGQKIVTEYKYNKDDKKVKVVRTYKITRLVVPKSIAMRKNWSKFGDSSNDKPGPNPQTTMVSEDVYMQFVSNKEEEQKSDNALDSLKNIAKCRICEGEHWSLSCPYKGTAYEAGKAKPVVPVQQEMAPTTAKSGKYVPPSMRDSQKPGMGGNPRGRDDTTAIRISNLSEAMTEADLEELVKKIGPHSKMFLARDKNTGLCKGFAYVHFKSRRDAATAIELLNGHGYDHLILNVEWSKPQNPQ.

2 disordered regions span residues 1–28 and 157–188; these read MPAL…PTEI and APTT…GRDD. The 79-residue stretch at 190-268 folds into the RRM domain; sequence TAIRISNLSE…LILNVEWSKP (79 aa).

It belongs to the eIF-3 subunit G family. As to quaternary structure, component of the eukaryotic translation initiation factor 3 (eIF-3) complex.

It localises to the cytoplasm. Its function is as follows. RNA-binding component of the eukaryotic translation initiation factor 3 (eIF-3) complex, which is involved in protein synthesis of a specialized repertoire of mRNAs and, together with other initiation factors, stimulates binding of mRNA and methionyl-tRNAi to the 40S ribosome. The eIF-3 complex specifically targets and initiates translation of a subset of mRNAs involved in cell proliferation. This subunit can bind 18S rRNA. The polypeptide is Eukaryotic translation initiation factor 3 subunit G (Aedes aegypti (Yellowfever mosquito)).